A 128-amino-acid chain; its full sequence is Ribonuclease P protein component (128 aa).

This sequence belongs to the RnpA family. Consists of a catalytic RNA component (M1 or rnpB) and a protein subunit.

It carries out the reaction Endonucleolytic cleavage of RNA, removing 5'-extranucleotides from tRNA precursor.. Functionally, RNaseP catalyzes the removal of the 5'-leader sequence from pre-tRNA to produce the mature 5'-terminus. It can also cleave other RNA substrates such as 4.5S RNA. The protein component plays an auxiliary but essential role in vivo by binding to the 5'-leader sequence and broadening the substrate specificity of the ribozyme. This chain is Ribonuclease P protein component, found in Parasynechococcus marenigrum (strain WH8102).